Consider the following 219-residue polypeptide: Small ribosomal subunit protein uS19 (219 aa).

Positions 1–128 are unknown; that stretch reads MGFKGAWNKR…YEEIYAQYKQ (128 aa). The interval 129 to 219 is small ribosomal subunit protein uS19; sequence MTEKKAYVDP…DKTAKVVKKK (91 aa).

The protein belongs to the universal ribosomal protein uS19 family.

In terms of biological role, protein S19 forms a complex with S13 that binds strongly to the 16S ribosomal RNA. The sequence is that of Small ribosomal subunit protein uS19 from Aquifex pyrophilus.